Consider the following 209-residue polypeptide: Uracil phosphoribosyltransferase (209 aa).

Residues Arg-79, Arg-104, and 131-139 (DPMLATGGS) each bind 5-phospho-alpha-D-ribose 1-diphosphate. Uracil is bound by residues Ile-194 and 199–201 (GDA). Asp-200 serves as a coordination point for 5-phospho-alpha-D-ribose 1-diphosphate.

This sequence belongs to the UPRTase family. Mg(2+) is required as a cofactor.

The catalysed reaction is UMP + diphosphate = 5-phospho-alpha-D-ribose 1-diphosphate + uracil. It participates in pyrimidine metabolism; UMP biosynthesis via salvage pathway; UMP from uracil: step 1/1. Allosterically activated by GTP. Functionally, catalyzes the conversion of uracil and 5-phospho-alpha-D-ribose 1-diphosphate (PRPP) to UMP and diphosphate. The sequence is that of Uracil phosphoribosyltransferase from Streptococcus sanguinis (strain SK36).